Here is a 296-residue protein sequence, read N- to C-terminus: Phosphatidylserine decarboxylase proenzyme (296 aa).

Residues Asp-113, His-169, and Ser-256 each act as charge relay system; for autoendoproteolytic cleavage activity in the active site. Ser-256 serves as the catalytic Schiff-base intermediate with substrate; via pyruvic acid; for decarboxylase activity. At Ser-256 the chain carries Pyruvic acid (Ser); by autocatalysis.

It belongs to the phosphatidylserine decarboxylase family. PSD-B subfamily. Prokaryotic type II sub-subfamily. Heterodimer of a large membrane-associated beta subunit and a small pyruvoyl-containing alpha subunit. Pyruvate is required as a cofactor. In terms of processing, is synthesized initially as an inactive proenzyme. Formation of the active enzyme involves a self-maturation process in which the active site pyruvoyl group is generated from an internal serine residue via an autocatalytic post-translational modification. Two non-identical subunits are generated from the proenzyme in this reaction, and the pyruvate is formed at the N-terminus of the alpha chain, which is derived from the carboxyl end of the proenzyme. The autoendoproteolytic cleavage occurs by a canonical serine protease mechanism, in which the side chain hydroxyl group of the serine supplies its oxygen atom to form the C-terminus of the beta chain, while the remainder of the serine residue undergoes an oxidative deamination to produce ammonia and the pyruvoyl prosthetic group on the alpha chain. During this reaction, the Ser that is part of the protease active site of the proenzyme becomes the pyruvoyl prosthetic group, which constitutes an essential element of the active site of the mature decarboxylase.

It is found in the cell membrane. The catalysed reaction is a 1,2-diacyl-sn-glycero-3-phospho-L-serine + H(+) = a 1,2-diacyl-sn-glycero-3-phosphoethanolamine + CO2. It participates in phospholipid metabolism; phosphatidylethanolamine biosynthesis; phosphatidylethanolamine from CDP-diacylglycerol: step 2/2. Catalyzes the formation of phosphatidylethanolamine (PtdEtn) from phosphatidylserine (PtdSer). In Clostridium botulinum (strain Eklund 17B / Type B), this protein is Phosphatidylserine decarboxylase proenzyme.